Consider the following 460-residue polypeptide: NADH-quinone oxidoreductase subunit N (460 aa).

A run of 13 helical transmembrane segments spans residues 2-22 (LLPE…AVML), 28-48 (IVAN…LKYS), 65-85 (ANIA…MIIY), 104-124 (ILLS…LLLF), 155-175 (FILG…IYGF), 196-216 (LGLV…LSSA), 230-250 (PIAS…AILL), 263-283 (ISYN…ALGA), 292-312 (LMAY…LLRT), 321-341 (LYML…IMLL), 363-383 (IAAA…LAGF), 400-420 (LLAY…LKII), and 438-458 (YGLL…SFII).

Belongs to the complex I subunit 2 family. In terms of assembly, NDH-1 is composed of 14 different subunits. Subunits NuoA, H, J, K, L, M, N constitute the membrane sector of the complex.

It is found in the cell inner membrane. The enzyme catalyses a quinone + NADH + 5 H(+)(in) = a quinol + NAD(+) + 4 H(+)(out). Its function is as follows. NDH-1 shuttles electrons from NADH, via FMN and iron-sulfur (Fe-S) centers, to quinones in the respiratory chain. The immediate electron acceptor for the enzyme in this species is believed to be ubiquinone. Couples the redox reaction to proton translocation (for every two electrons transferred, four hydrogen ions are translocated across the cytoplasmic membrane), and thus conserves the redox energy in a proton gradient. The sequence is that of NADH-quinone oxidoreductase subunit N from Rickettsia bellii (strain RML369-C).